We begin with the raw amino-acid sequence, 469 residues long: Glutamate--tRNA ligase (469 aa).

A 'HIGH' region motif is present at residues 11–21 (PSPTGFIHLGN). Basic and acidic residues predominate over residues 114 to 131 (QREAGEKPRYDGTWRPEP). The interval 114 to 139 (QREAGEKPRYDGTWRPEPGKVLPEPP) is disordered. The short motif at 243–247 (KMSKR) is the 'KMSKS' region element. K246 is an ATP binding site.

It belongs to the class-I aminoacyl-tRNA synthetase family. Glutamate--tRNA ligase type 1 subfamily. As to quaternary structure, monomer.

The protein resides in the cytoplasm. The catalysed reaction is tRNA(Glu) + L-glutamate + ATP = L-glutamyl-tRNA(Glu) + AMP + diphosphate. In terms of biological role, catalyzes the attachment of glutamate to tRNA(Glu) in a two-step reaction: glutamate is first activated by ATP to form Glu-AMP and then transferred to the acceptor end of tRNA(Glu). This chain is Glutamate--tRNA ligase, found in Paraburkholderia xenovorans (strain LB400).